Here is a 258-residue protein sequence, read N- to C-terminus: 4-oxalmesaconate hydratase (258 aa).

Zn(2+)-binding residues include histidine 28, aspartate 31, and histidine 141.

This sequence belongs to the MshB deacetylase family. Zn(2+) is required as a cofactor.

It catalyses the reaction 2-hydroxy-4-oxobutane-1,2,4-tricarboxylate = 4-carboxy-2-hydroxy-cis,cis-muconate + H2O. Catalyzes the conversion of oxalomesaconic acid enol (OMAenol) to 4-carboxy-4-hydroxy-2-oxoadipic acid (CHA). Mediates the third step of gallate degradation pathway. The sequence is that of 4-oxalmesaconate hydratase (galB) from Pseudomonas putida (strain ATCC 47054 / DSM 6125 / CFBP 8728 / NCIMB 11950 / KT2440).